Consider the following 106-residue polypeptide: uncharacterized protein (106 aa).

This sequence belongs to the HesB/IscA family.

This is an uncharacterized protein from Rhodobacter capsulatus (Rhodopseudomonas capsulata).